Here is a 391-residue protein sequence, read N- to C-terminus: Mannonate dehydratase (391 aa).

The interval 334–359 (ERRRERDGGPRLPLRPDHGHHLLDDL) is disordered.

Belongs to the mannonate dehydratase family. Requires Fe(2+) as cofactor. It depends on Mn(2+) as a cofactor.

It carries out the reaction D-mannonate = 2-dehydro-3-deoxy-D-gluconate + H2O. It functions in the pathway carbohydrate metabolism; pentose and glucuronate interconversion. Catalyzes the dehydration of D-mannonate. This chain is Mannonate dehydratase, found in Chromohalobacter salexigens (strain ATCC BAA-138 / DSM 3043 / CIP 106854 / NCIMB 13768 / 1H11).